Here is a 148-residue protein sequence, read N- to C-terminus: uncharacterized protein (148 aa).

Positions 36–45 (PGAPSAGPMS) are enriched in low complexity. A disordered region spans residues 36-148 (PGAPSAGPMS…SGTAFFPGTT (113 aa)). Residues 46-55 (DSNSKGSTPR) are compositionally biased toward polar residues.

This is an uncharacterized protein from Bovine leukemia virus (isolate Japanese BLV-1) (BLV).